Consider the following 739-residue polypeptide: Phosphoribosylformylglycinamidine synthase subunit PurL (739 aa).

The active site involves His54. ATP contacts are provided by Tyr57 and Lys96. Glu98 contacts Mg(2+). Residues 99–102 (SHNH) and Arg121 each bind substrate. His100 functions as the Proton acceptor in the catalytic mechanism. Asp122 is a binding site for Mg(2+). Residue Gln245 participates in substrate binding. Asp275 contributes to the Mg(2+) binding site. 319–321 (ESQ) is a substrate binding site. Residues Asp504 and Gly541 each contribute to the ATP site. Residue Asn542 participates in Mg(2+) binding. Residue Ser544 coordinates substrate.

Belongs to the FGAMS family. Monomer. Part of the FGAM synthase complex composed of 1 PurL, 1 PurQ and 2 PurS subunits.

The protein localises to the cytoplasm. It carries out the reaction N(2)-formyl-N(1)-(5-phospho-beta-D-ribosyl)glycinamide + L-glutamine + ATP + H2O = 2-formamido-N(1)-(5-O-phospho-beta-D-ribosyl)acetamidine + L-glutamate + ADP + phosphate + H(+). It participates in purine metabolism; IMP biosynthesis via de novo pathway; 5-amino-1-(5-phospho-D-ribosyl)imidazole from N(2)-formyl-N(1)-(5-phospho-D-ribosyl)glycinamide: step 1/2. Part of the phosphoribosylformylglycinamidine synthase complex involved in the purines biosynthetic pathway. Catalyzes the ATP-dependent conversion of formylglycinamide ribonucleotide (FGAR) and glutamine to yield formylglycinamidine ribonucleotide (FGAM) and glutamate. The FGAM synthase complex is composed of three subunits. PurQ produces an ammonia molecule by converting glutamine to glutamate. PurL transfers the ammonia molecule to FGAR to form FGAM in an ATP-dependent manner. PurS interacts with PurQ and PurL and is thought to assist in the transfer of the ammonia molecule from PurQ to PurL. The chain is Phosphoribosylformylglycinamidine synthase subunit PurL from Lactococcus lactis subsp. cremoris (strain SK11).